A 119-amino-acid polypeptide reads, in one-letter code: uncharacterized protein (119 aa).

2 helical membrane passes run 19–39 (FYPS…PSFL) and 68–88 (FPWF…PWLL).

The protein localises to the membrane. This is an uncharacterized protein from Saccharomyces cerevisiae (strain ATCC 204508 / S288c) (Baker's yeast).